The sequence spans 156 residues: Small ribosomal subunit protein uS7 (156 aa).

This sequence belongs to the universal ribosomal protein uS7 family. Part of the 30S ribosomal subunit. Contacts proteins S9 and S11.

One of the primary rRNA binding proteins, it binds directly to 16S rRNA where it nucleates assembly of the head domain of the 30S subunit. Is located at the subunit interface close to the decoding center, probably blocks exit of the E-site tRNA. This is Small ribosomal subunit protein uS7 from Synechococcus sp. (strain CC9902).